We begin with the raw amino-acid sequence, 355 residues long: tRNA-specific 2-thiouridylase MnmA (355 aa).

ATP contacts are provided by residues 6–13 (LLSGGVDS) and Leu33. The active-site Nucleophile is the Cys100. An intrachain disulfide couples Cys100 to Cys195. Gly123 is a binding site for ATP. The interval 145 to 147 (KDQ) is interaction with tRNA. The active-site Cysteine persulfide intermediate is Cys195.

This sequence belongs to the MnmA/TRMU family.

Its subcellular location is the cytoplasm. The enzyme catalyses S-sulfanyl-L-cysteinyl-[protein] + uridine(34) in tRNA + AH2 + ATP = 2-thiouridine(34) in tRNA + L-cysteinyl-[protein] + A + AMP + diphosphate + H(+). Its function is as follows. Catalyzes the 2-thiolation of uridine at the wobble position (U34) of tRNA, leading to the formation of s(2)U34. This is tRNA-specific 2-thiouridylase MnmA from Borreliella burgdorferi (strain ATCC 35210 / DSM 4680 / CIP 102532 / B31) (Borrelia burgdorferi).